The primary structure comprises 107 residues: Antimicrobial peptide damicornin (107 aa).

An N-terminal signal peptide occupies residues 1 to 22 (MKVLVILFGAMLVLMEFQKASA). A propeptide spanning residues 23-67 (ATLLEDFDDDDDLLDDGGDFDLEANSDASSGNGNDSNDAVPEKRR) is cleaved from the precursor. Positions 37–46 (DDGGDFDLEA) are enriched in acidic residues. The disordered stretch occupies residues 37–62 (DDGGDFDLEANSDASSGNGNDSNDAV). A compositionally biased stretch (low complexity) spans 47-61 (NSDASSGNGNDSNDA). 3 cysteine pairs are disulfide-bonded: cysteine 69/cysteine 105, cysteine 78/cysteine 99, and cysteine 85/cysteine 103. Position 106 is an arginine amide (arginine 106).

It belongs to the coral AMP family. In terms of tissue distribution, is specifically expressed in the granular cells of the ectoderm.

Its subcellular location is the cytoplasm. The protein localises to the stress granule. It is found in the secreted. Functionally, cationic peptide with probable antimicrobial activity against coral pathogens. Shows in vitro activity against Gram-positive bacteria and the filamentous fungus F.oxysporum (MIC=1.25 uM). Gram-positive bacteria tested are B.megaterium (MIC=20 uM), S.aureus (MIC=5 uM), M. luteus (MIC=1.25 uM), B.stationis (MIC=10 uM), M.maritypicum (MIC=20 uM). Has no or little effect against Gram-negative bacteria (the coral pathogen V.coralliilyticus (MIC&gt;20 uM), V.aesturianus (MIC&gt;20 uM), V.shiloi (MIC&gt;20 uM), and E.coli (MIC=10 uM)). Has no hemolytic activity against sheep erythrocytes. The protein is Antimicrobial peptide damicornin of Pocillopora damicornis (Cauliflower coral).